A 463-amino-acid polypeptide reads, in one-letter code: Proton-coupled folate transporter (463 aa).

At 1–27 (MVSPDDSPEIRDRPRPRRCLLPASVTV) the chain is on the cytoplasmic side. A helical transmembrane segment spans residues 28–46 (EPVIFLSMFALALQGPLAT). Residues 47-86 (QYLWDRLSADIGFNGTRTVGCAMNGSKSAGPEQQEVETLT) lie on the Extracellular side of the membrane. N-linked (GlcNAc...) asparagine glycosylation is found at Asn-60 and Asn-70. Cys-67 and Cys-302 are oxidised to a cystine. The helical transmembrane segment at 87 to 112 (AHWSLYINLGGFLVGLFSVMLLGPWS) threads the bilayer. The Cytoplasmic segment spans residues 113–116 (DKVG). The helical transmembrane segment at 117-139 (RRPVLMLPCIGLALQAAVYLLVM) threads the bilayer. Residues 140–144 (YQELH) are Extracellular-facing. A helical membrane pass occupies residues 145-158 (VGYFLIGRFISGIS). Over 159-181 (GDFNMILAGCFAYIADVSDRQSR) the chain is Cytoplasmic. Positions 160 and 189 each coordinate H(+). The chain crosses the membrane as a helical span at residues 182 to 207 (TFRVAVLEACLGIAGMVASIIGGHWR). Residues 208 to 212 (KAQGY) lie on the Extracellular side of the membrane. Residues 213 to 231 (INPFWLVFAVNLFTALYVY) form a helical membrane-spanning segment. At 232–270 (FCVEESVKDKKPARLFTHRHYQSFFRLFTVQGENNRRRK) the chain is on the cytoplasmic side. Residues 271–293 (LFLYSLALLVVVTVHMGAKNLFV) form a helical membrane-spanning segment. Residue His-285 participates in H(+) binding. Residues 294-306 (LYELSYPLCWDSD) are Extracellular-facing. A helical transmembrane segment spans residues 307-329 (LIGYGSAAEHLTYLSSLAGLRLF). At 330–335 (QLCLAD) the chain is on the cytoplasmic side. A helical membrane pass occupies residues 336 to 355 (SWVAEMGFISNISGLVVISL). Topologically, residues 356–359 (ASTT) are extracellular. Residues 360–380 (PIMFTGYGLRFFAMATTPVIR) traverse the membrane as a helical segment. Topologically, residues 381–392 (SKLSKMVEEGEQ) are cytoplasmic. The helical transmembrane segment at 393–418 (GALFSSVACVEGLSFLLATGLFNSLY) threads the bilayer. Over 419 to 426 (PATLHFMK) the chain is Extracellular. Residues 427–445 (GFPFLLGALLLLIPAGIIG) traverse the membrane as a helical segment. The Cytoplasmic segment spans residues 446–463 (LIEVCEQKPMYSQFSEIS).

Belongs to the major facilitator superfamily. SLC46A family. As to quaternary structure, monomer.

Its subcellular location is the cell membrane. It localises to the apical cell membrane. It is found in the basolateral cell membrane. The protein resides in the endosome membrane. The protein localises to the cytoplasm. It carries out the reaction folate(in) + H(+)(in) = folate(out) + H(+)(out). The enzyme catalyses (6S)-5-methyl-5,6,7,8-tetrahydrofolate(in) + H(+)(in) = (6S)-5-methyl-5,6,7,8-tetrahydrofolate(out) + H(+)(out). The catalysed reaction is methotrexate(in) + H(+)(in) = methotrexate(out) + H(+)(out). It catalyses the reaction pemetrexed(in) + H(+)(in) = pemetrexed(out) + H(+)(out). Functionally, proton-coupled folate symporter that mediates folate absorption using an H(+) gradient as a driving force. Involved in the intestinal absorption of folates at the brush-border membrane of the proximal jejunum, and the transport from blood to cerebrospinal fluid across the choroid plexus. Functions at acidic pH via alternate outward- and inward-open conformation states. Protonation of residues in the outward open state primes the protein for transport. Binding of folate promotes breaking of salt bridge network and subsequent closure of the extracellular gate, leading to the inward-open state and release of protons and folate. Also able to transport antifolate drugs, such as methotrexate and pemetrexed. Also acts as a lower-affinity, pH-independent heme carrier protein and constitutes the main importer of heme in the intestine. Imports heme in the retina and retinal pigment epithelium, in neurons of the hippocampus, in hepatocytes and in the renal epithelial cells. This Xenopus laevis (African clawed frog) protein is Proton-coupled folate transporter.